We begin with the raw amino-acid sequence, 676 residues long: Phosphatidylinositol-3,5-bisphosphate 3-phosphatase MTMR6 (676 aa).

The region spanning 125 to 501 is the Myotubularin phosphatase domain; sequence GWRRLDWNSE…ARFTVWTAMY (377 aa). Positions 249, 274, and 275 each coordinate a 1,2-diacyl-sn-glycero-3-phospho-(1D-myo-inositol-3,5-bisphosphate). Asparagine 249, asparagine 274, and isoleucine 275 together coordinate a 1,2-diacyl-sn-glycero-3-phospho-(1D-myo-inositol-3-phosphate). Substrate-binding positions include 249 to 252, 274 to 275, and 335 to 341; these read NKVQ, NI, and CSDGWDR. Cysteine 335 acts as the Phosphocysteine intermediate in catalysis. 8 residues coordinate a 1,2-diacyl-sn-glycero-3-phospho-(1D-myo-inositol-3,5-bisphosphate): serine 336, aspartate 337, glycine 338, tryptophan 339, aspartate 340, arginine 341, lysine 377, and arginine 381. The a 1,2-diacyl-sn-glycero-3-phospho-(1D-myo-inositol-3-phosphate) site is built by serine 336, aspartate 337, glycine 338, tryptophan 339, aspartate 340, and arginine 341. Arginine 381 is a binding site for a 1,2-diacyl-sn-glycero-3-phospho-(1D-myo-inositol-3-phosphate). Position 381 (arginine 381) interacts with substrate. The segment at 618–675 adopts an FYVE-type zinc-finger fold; the sequence is KWQPLRGADRCSNPACRGEFSSTIERRIHCHLCGMIFCRRCLKVSADERERVCDKCKT.

This sequence belongs to the protein-tyrosine phosphatase family. Non-receptor class myotubularin subfamily. Heterodimer with mtm-9. In terms of tissue distribution, expressed in intestinal cells. Expressed in head neurons, pre-anal ganglion, hypodermal cells, anal depressor muscle and non-neuronal cells in the tail.

The protein localises to the cytoplasm. The protein resides in the membrane. It is found in the apical cell membrane. It catalyses the reaction a 1,2-diacyl-sn-glycero-3-phospho-(1D-myo-inositol-3,5-bisphosphate) + H2O = a 1,2-diacyl-sn-glycero-3-phospho-(1D-myo-inositol-5-phosphate) + phosphate. The catalysed reaction is a 1,2-diacyl-sn-glycero-3-phospho-(1D-myo-inositol-3-phosphate) + H2O = a 1,2-diacyl-sn-glycero-3-phospho-(1D-myo-inositol) + phosphate. It carries out the reaction 1,2-dioctanoyl-sn-glycero-3-phospho-(1D-myo-inositol-3,5-bisphosphate) + H2O = 1,2-dioctanoyl-sn-glycero-3-phospho-(1D-myo-inositol-5-phosphate) + phosphate. The enzyme catalyses 1,2-dioctanoyl-sn-glycero-3-phospho-(1-D-myo-inositol-3-phosphate) + H2O = 1,2-dioctanoyl-sn-glycero-3-phospho-(1D-myo-inositol) + phosphate. Its function is as follows. Probable lipid phosphatase that specifically dephosphorylates the D-3 position of phosphatidylinositol 3-phosphate and phosphatidylinositol 3,5-bisphosphate, generating phosphatidylinositol and phosphatidylinositol 5-phosphate. In association with mtm-9, plays a role in endosome trafficking probably by regulating phosphatidylinositol-3-phosphate levels. Regulates fluid phase endocytosis in coelomocytes. Controls the endosomal localization of sorting nexin snx-3 and the levels of sorting receptor mig-14. By regulating the retrograde transport of mig-14, may be involved in the secretion of Wnt ligands such as egl-20. Regulates posterior migration of QL neuroblast descendants and the anterior migration of QR neuroblast descendants and HSN neurons during larval development. Involved in the formation of correct synapse number in DA9 motor neurons probably in part by regulating the secretion of Wnt ligand egl-20. The protein is Phosphatidylinositol-3,5-bisphosphate 3-phosphatase MTMR6 of Caenorhabditis elegans.